A 417-amino-acid polypeptide reads, in one-letter code: Gamma-glutamyl phosphate reductase (417 aa).

This sequence belongs to the gamma-glutamyl phosphate reductase family.

The protein localises to the cytoplasm. It catalyses the reaction L-glutamate 5-semialdehyde + phosphate + NADP(+) = L-glutamyl 5-phosphate + NADPH + H(+). The protein operates within amino-acid biosynthesis; L-proline biosynthesis; L-glutamate 5-semialdehyde from L-glutamate: step 2/2. Its function is as follows. Catalyzes the NADPH-dependent reduction of L-glutamate 5-phosphate into L-glutamate 5-semialdehyde and phosphate. The product spontaneously undergoes cyclization to form 1-pyrroline-5-carboxylate. This is Gamma-glutamyl phosphate reductase from Phocaeicola vulgatus (strain ATCC 8482 / DSM 1447 / JCM 5826 / CCUG 4940 / NBRC 14291 / NCTC 11154) (Bacteroides vulgatus).